The primary structure comprises 491 residues: Probable V-type proton ATPase subunit B 1 (491 aa).

Residue Arg-380 coordinates ATP.

Belongs to the ATPase alpha/beta chains family. As to quaternary structure, V-ATPase is a heteromultimeric enzyme made up of two complexes: the ATP-hydrolytic V1 complex and the proton translocation V0 complex. The V1 complex consists of three catalytic AB heterodimers that form a heterohexamer, three peripheral stalks each consisting of EG heterodimers, one central rotor including subunits D and F, and the regulatory subunits C and H. The proton translocation complex V0 consists of the proton transport subunit a, a ring of proteolipid subunits c9c'', rotary subunit d, subunits e and f, and the accessory subunits vah-19/Ac45 and vah-20/PRR.

Functionally, non-catalytic subunit of the V1 complex of vacuolar(H+)-ATPase (V-ATPase), a multisubunit enzyme composed of a peripheral complex (V1) that hydrolyzes ATP and a membrane integral complex (V0) that translocates protons. V-ATPase is responsible for acidifying and maintaining the pH of intracellular compartments and in some cell types, is targeted to the plasma membrane, where it is responsible for acidifying the extracellular environment. Essential for the proper assembly and activity of V-ATPase. Required maternally for early embryogenesis and zygotically during morphogenesis. Specifically, involved in the clearance of apoptotic cell corpses in embryos. Also, during embryonic development, the V-ATPase is required to repress fusion of epidermal cells probably by negatively regulating eff-1-mediated cell fusion. In neurons, required for necrotic cell death by promoting intracellular acidification. Required for cell death induced by hypoxia. Required for acidification of synaptic vesicles and the release of neurotransmitters from adult neurons. In Caenorhabditis briggsae, this protein is Probable V-type proton ATPase subunit B 1.